We begin with the raw amino-acid sequence, 579 residues long: Type II restriction enzyme FokI (579 aa).

Residues D450, D467, and K469 contribute to the active site.

In terms of assembly, monomer, in which form it can cleave DNA. Homodimer when bound to DNA. Mg(2+) serves as cofactor.

The catalysed reaction is Endonucleolytic cleavage of DNA to give specific double-stranded fragments with terminal 5'-phosphates.. Its function is as follows. An S subtype restriction enzyme that recognizes the asymmetric double-stranded sequence 5'-GGATG-3' and cleaves respectively 14 bases after G-1 (top strand) and 13 bases before C-1 (bottom strand). The polypeptide is Type II restriction enzyme FokI (Planomicrobium okeanokoites (Planococcus okeanokoites)).